We begin with the raw amino-acid sequence, 226 residues long: Phosphoribosylformylglycinamidine synthase subunit PurQ (226 aa).

The region spanning 4–226 (RIGVVTFPGS…TSILKKLVNA (223 aa)) is the Glutamine amidotransferase type-1 domain. The active-site Nucleophile is Cys-87. Active-site residues include His-196 and Glu-198.

As to quaternary structure, part of the FGAM synthase complex composed of 1 PurL, 1 PurQ and 2 PurS subunits.

It localises to the cytoplasm. It carries out the reaction N(2)-formyl-N(1)-(5-phospho-beta-D-ribosyl)glycinamide + L-glutamine + ATP + H2O = 2-formamido-N(1)-(5-O-phospho-beta-D-ribosyl)acetamidine + L-glutamate + ADP + phosphate + H(+). The enzyme catalyses L-glutamine + H2O = L-glutamate + NH4(+). Its pathway is purine metabolism; IMP biosynthesis via de novo pathway; 5-amino-1-(5-phospho-D-ribosyl)imidazole from N(2)-formyl-N(1)-(5-phospho-D-ribosyl)glycinamide: step 1/2. Its function is as follows. Part of the phosphoribosylformylglycinamidine synthase complex involved in the purines biosynthetic pathway. Catalyzes the ATP-dependent conversion of formylglycinamide ribonucleotide (FGAR) and glutamine to yield formylglycinamidine ribonucleotide (FGAM) and glutamate. The FGAM synthase complex is composed of three subunits. PurQ produces an ammonia molecule by converting glutamine to glutamate. PurL transfers the ammonia molecule to FGAR to form FGAM in an ATP-dependent manner. PurS interacts with PurQ and PurL and is thought to assist in the transfer of the ammonia molecule from PurQ to PurL. This Streptomyces coelicolor (strain ATCC BAA-471 / A3(2) / M145) protein is Phosphoribosylformylglycinamidine synthase subunit PurQ.